The primary structure comprises 147 residues: Flagellar assembly factor FliW (147 aa).

The protein belongs to the FliW family. Interacts with translational regulator CsrA and flagellin(s).

The protein localises to the cytoplasm. In terms of biological role, acts as an anti-CsrA protein, binds CsrA and prevents it from repressing translation of its target genes, one of which is flagellin. Binds to flagellin and participates in the assembly of the flagellum. This Treponema denticola (strain ATCC 35405 / DSM 14222 / CIP 103919 / JCM 8153 / KCTC 15104) protein is Flagellar assembly factor FliW.